The sequence spans 875 residues: Alanine--tRNA ligase (875 aa).

Zn(2+)-binding residues include His-564, His-568, Cys-666, and His-670.

Belongs to the class-II aminoacyl-tRNA synthetase family. Homotetramer. It depends on Zn(2+) as a cofactor.

It localises to the cytoplasm. It carries out the reaction tRNA(Ala) + L-alanine + ATP = L-alanyl-tRNA(Ala) + AMP + diphosphate. Functionally, catalyzes the attachment of alanine to tRNA(Ala) in a two-step reaction: alanine is first activated by ATP to form Ala-AMP and then transferred to the acceptor end of tRNA(Ala). Also edits incorrectly charged Ser-tRNA(Ala) and Gly-tRNA(Ala) via its editing domain. In Pectobacterium atrosepticum (strain SCRI 1043 / ATCC BAA-672) (Erwinia carotovora subsp. atroseptica), this protein is Alanine--tRNA ligase.